The chain runs to 179 residues: UPF0227 protein VS_2073 (179 aa).

Belongs to the UPF0227 family.

This Vibrio atlanticus (strain LGP32) (Vibrio splendidus (strain Mel32)) protein is UPF0227 protein VS_2073.